The following is a 221-amino-acid chain: PKHD-type hydroxylase PMT_0286 (221 aa).

A Fe2OG dioxygenase domain is found at 80–174 (HIHGVMFSRS…RLVCVGWIQS (95 aa)). Fe cation is bound by residues His98, Asp100, and His155. Position 165 (Arg165) interacts with 2-oxoglutarate.

Fe(2+) is required as a cofactor. Requires L-ascorbate as cofactor.

The polypeptide is PKHD-type hydroxylase PMT_0286 (Prochlorococcus marinus (strain MIT 9313)).